The following is a 456-amino-acid chain: Aromatic amino acid transport protein AroP (456 aa).

The Cytoplasmic segment spans residues 1–18 (MEGQQHGEQLKRGLKNRH). The chain crosses the membrane as a helical span at residues 19 to 39 (IQLIALGGAIGTGLFLGSASV). Residues 40-41 (IQ) are Periplasmic-facing. Residues 42 to 62 (SAGPGIILGYAIAGFIAFLIM) traverse the membrane as a helical segment. Residues 63-85 (RQLGEMVVEEPVAGSFSHFAYKY) lie on the Cytoplasmic side of the membrane. A helical transmembrane segment spans residues 86 to 106 (WGSFAGFASGWNYWVLYVLVA). Topologically, residues 107-116 (MAELTAVGKY) are periplasmic. Residues 117 to 137 (IQFWYPEIPTWVSAAVFFVVI) form a helical membrane-spanning segment. The Cytoplasmic portion of the chain corresponds to 138–154 (NAINLTNVKVFGEMEFW). The helical transmembrane segment at 155 to 175 (FAIIKVIAVVAMIIFGAWLLF) threads the bilayer. The Periplasmic portion of the chain corresponds to 176–200 (SGNGGPQASVSNLWDQGGFLPHGFT). Residues 201 to 221 (GLVMMMAIIMFSFGGLELVGI) form a helical membrane-spanning segment. At 222 to 239 (TAAEADNPEQSIPKATNQ) the chain is on the cytoplasmic side. Residues 240 to 260 (VIYRILIFYIGSLAVLLSLMP) traverse the membrane as a helical segment. At 261–270 (WTRVTADTSP) the chain is on the periplasmic side. A helical membrane pass occupies residues 271–291 (FVLIFHELGDTFVANALNIVV). Over 292–332 (LTAALSVYNSCVYCNSRMLFGLAQQGNAPKALASVDKRGVP) the chain is Cytoplasmic. A helical transmembrane segment spans residues 333 to 353 (VNTILVSALVTALCVLINYLA). At 354-357 (PESA) the chain is on the periplasmic side. The helical transmembrane segment at 358-378 (FGLLMALVVSALVINWAMISL) threads the bilayer. Topologically, residues 379–398 (AHMKFRRAKQEQGVVTRFPA) are cytoplasmic. A helical transmembrane segment spans residues 399-419 (LLYPLGNWICLLFMAAVLVIM). Topologically, residues 420-424 (LMTPG) are periplasmic. The helical transmembrane segment at 425-445 (MAISVYLIPVWLIVLGIGYLF) threads the bilayer. Residues 446-456 (KEKTAKAVKAH) are Cytoplasmic-facing.

Belongs to the amino acid-polyamine-organocation (APC) superfamily. Amino acid transporter (AAT) (TC 2.A.3.1) family.

Its subcellular location is the cell inner membrane. It catalyses the reaction L-phenylalanine(in) + H(+)(in) = L-phenylalanine(out) + H(+)(out). The catalysed reaction is L-tryptophan(in) + H(+)(in) = L-tryptophan(out) + H(+)(out). It carries out the reaction L-tyrosine(in) + H(+)(in) = L-tyrosine(out) + H(+)(out). Permease that is involved in the active transport across the cytoplasmic membrane of all three aromatic amino acids, phenylalanine, tyrosine and tryptophan. The polypeptide is Aromatic amino acid transport protein AroP (aroP) (Escherichia coli O6:H1 (strain CFT073 / ATCC 700928 / UPEC)).